Reading from the N-terminus, the 478-residue chain is Adenosylhomocysteinase (478 aa).

T57, D139, and E201 together coordinate substrate. Residue 202-204 (TTT) participates in NAD(+) binding. The substrate site is built by K231 and D235. NAD(+)-binding positions include N236, 265–270 (GYGDVG), E288, N323, 344–346 (IGH), and N392.

It belongs to the adenosylhomocysteinase family. NAD(+) is required as a cofactor.

It localises to the cytoplasm. It catalyses the reaction S-adenosyl-L-homocysteine + H2O = L-homocysteine + adenosine. The protein operates within amino-acid biosynthesis; L-homocysteine biosynthesis; L-homocysteine from S-adenosyl-L-homocysteine: step 1/1. May play a key role in the regulation of the intracellular concentration of adenosylhomocysteine. The protein is Adenosylhomocysteinase of Corynebacterium efficiens (strain DSM 44549 / YS-314 / AJ 12310 / JCM 11189 / NBRC 100395).